A 437-amino-acid chain; its full sequence is Eukaryotic peptide chain release factor subunit 1 (437 aa).

It belongs to the eukaryotic release factor 1 family. Heterodimer of two subunits, one of which binds GTP.

It is found in the cytoplasm. Its function is as follows. Directs the termination of nascent peptide synthesis (translation) in response to the termination codons UAA and possibly also UAG and UGA. The polypeptide is Eukaryotic peptide chain release factor subunit 1 (eRF1) (Didinium nasutum).